The primary structure comprises 371 residues: Queuine tRNA-ribosyltransferase (371 aa).

Asp-90 (proton acceptor) is an active-site residue. Substrate-binding positions include 90–94 (DSGGF), Asp-144, Gln-188, and Gly-215. Residues 246-252 (GVGTPED) form an RNA binding region. Catalysis depends on Asp-265, which acts as the Nucleophile. Residues 270 to 274 (TRNAR) form an RNA binding; important for wobble base 34 recognition region. Residues Cys-303, Cys-305, Cys-308, and His-334 each contribute to the Zn(2+) site.

It belongs to the queuine tRNA-ribosyltransferase family. As to quaternary structure, homodimer. Within each dimer, one monomer is responsible for RNA recognition and catalysis, while the other monomer binds to the replacement base PreQ1. The cofactor is Zn(2+).

It catalyses the reaction 7-aminomethyl-7-carbaguanine + guanosine(34) in tRNA = 7-aminomethyl-7-carbaguanosine(34) in tRNA + guanine. Its pathway is tRNA modification; tRNA-queuosine biosynthesis. Its function is as follows. Catalyzes the base-exchange of a guanine (G) residue with the queuine precursor 7-aminomethyl-7-deazaguanine (PreQ1) at position 34 (anticodon wobble position) in tRNAs with GU(N) anticodons (tRNA-Asp, -Asn, -His and -Tyr). Catalysis occurs through a double-displacement mechanism. The nucleophile active site attacks the C1' of nucleotide 34 to detach the guanine base from the RNA, forming a covalent enzyme-RNA intermediate. The proton acceptor active site deprotonates the incoming PreQ1, allowing a nucleophilic attack on the C1' of the ribose to form the product. After dissociation, two additional enzymatic reactions on the tRNA convert PreQ1 to queuine (Q), resulting in the hypermodified nucleoside queuosine (7-(((4,5-cis-dihydroxy-2-cyclopenten-1-yl)amino)methyl)-7-deazaguanosine). In Chromobacterium violaceum (strain ATCC 12472 / DSM 30191 / JCM 1249 / CCUG 213 / NBRC 12614 / NCIMB 9131 / NCTC 9757 / MK), this protein is Queuine tRNA-ribosyltransferase.